The primary structure comprises 351 residues: S-adenosylmethionine:tRNA ribosyltransferase-isomerase (351 aa).

The protein belongs to the QueA family. In terms of assembly, monomer.

The protein resides in the cytoplasm. The enzyme catalyses 7-aminomethyl-7-carbaguanosine(34) in tRNA + S-adenosyl-L-methionine = epoxyqueuosine(34) in tRNA + adenine + L-methionine + 2 H(+). Its pathway is tRNA modification; tRNA-queuosine biosynthesis. Transfers and isomerizes the ribose moiety from AdoMet to the 7-aminomethyl group of 7-deazaguanine (preQ1-tRNA) to give epoxyqueuosine (oQ-tRNA). The sequence is that of S-adenosylmethionine:tRNA ribosyltransferase-isomerase from Fusobacterium nucleatum subsp. nucleatum (strain ATCC 25586 / DSM 15643 / BCRC 10681 / CIP 101130 / JCM 8532 / KCTC 2640 / LMG 13131 / VPI 4355).